The primary structure comprises 270 residues: Chymotrypsin-like elastase family member 3B (270 aa).

The segment at residues 1-15 (MMLRLLSSLLLVAVA) is a signal peptide (or 16). The propeptide at 16 to 28 (SGYGPPSSRPSSR) is activation peptide. The Peptidase S1 domain maps to 29–268 (VVNGEDAVPY…FIDWIEETIA (240 aa)). An intrachain disulfide couples C58 to C74. H73 (charge relay system) is an active-site residue. Residue N114 is glycosylated (N-linked (GlcNAc...) asparagine). C117 and C120 form a disulfide bridge. The active-site Charge relay system is D123. Disulfide bonds link C157–C223, C188–C204, and C213–C244. S217 functions as the Charge relay system in the catalytic mechanism.

This sequence belongs to the peptidase S1 family. Elastase subfamily. In terms of tissue distribution, pancreas. Not detectable in keratinocytes.

The enzyme catalyses Preferential cleavage: Ala-|-Xaa. Does not hydrolyze elastin.. Functionally, efficient protease with alanine specificity but only little elastolytic activity. The chain is Chymotrypsin-like elastase family member 3B (CELA3B) from Homo sapiens (Human).